The primary structure comprises 349 residues: Short-wave-sensitive opsin 1 (349 aa).

Residues 1-34 (MSKMSEEEEFLLFKNISLVGPWDGPQYHLAPVWA) lie on the Extracellular side of the membrane. Asn15 carries N-linked (GlcNAc...) asparagine glycosylation. The chain crosses the membrane as a helical span at residues 35-59 (FHLQAVFMGFVFFVGTPLNATVLVA). The Cytoplasmic segment spans residues 60–71 (TLRYRKLRQPLN). The helical transmembrane segment at 72–97 (YILVNVSLGGFIYCIFSVFIVFITSC) threads the bilayer. The Extracellular segment spans residues 98–111 (YGYFVFGRHVCALE). A disulfide bridge links Cys108 with Cys185. Residues 112–131 (AFLGCTAGLVTGWSLAFLAF) form a helical membrane-spanning segment. The Cytoplasmic segment spans residues 132–150 (ERYIIICKPFGNFRFSSKH). A helical membrane pass occupies residues 151–174 (ALMVVVATWTIGIGVSIPPFFGWS). Residues 175 to 200 (RFVPEGLQCSCGPDWYTVGTKYYSEY) lie on the Extracellular side of the membrane. A helical membrane pass occupies residues 201–228 (YTWFLFIFCYIVPLSLICFSYSQLLGAL). The Cytoplasmic segment spans residues 229–250 (RAVAAQQQESASTQKAEREVSH). A helical membrane pass occupies residues 251 to 274 (MVVVMVGSFCLCYTPYAALAMYIV). Over 275–282 (NNRNHGVD) the chain is Extracellular. Residues 283 to 307 (LRLVTIPAFFSKSACVYNPIIYCFM) form a helical membrane-spanning segment. Position 294 is an N6-(retinylidene)lysine (Lys294). At 308-349 (NKQFRACIMEMVCGKPMTDESELSSSQKTEVSTVSSSQVGPN) the chain is on the cytoplasmic side. Positions 327-349 (ESELSSSQKTEVSTVSSSQVGPN) are disordered. Residues 330-349 (LSSSQKTEVSTVSSSQVGPN) show a composition bias toward polar residues.

Belongs to the G-protein coupled receptor 1 family. Opsin subfamily. Post-translationally, phosphorylated on some or all of the serine and threonine residues present in the C-terminal region.

Its subcellular location is the cell membrane. It localises to the photoreceptor inner segment. The protein resides in the cell projection. It is found in the cilium. The protein localises to the photoreceptor outer segment. Its subcellular location is the cytoplasm. It localises to the perinuclear region. Visual pigments are the light-absorbing molecules that mediate vision. They consist of an apoprotein, opsin, covalently linked to cis-retinal. Required for the maintenance of cone outer segment organization in the ventral retina, but not essential for the maintenance of functioning cone photoreceptors. Involved in ensuring correct abundance and localization of retinal membrane proteins. May increase spectral sensitivity in dim light. This is Short-wave-sensitive opsin 1 (OPN1SW) from Bos taurus (Bovine).